Here is a 108-residue protein sequence, read N- to C-terminus: Phosphoribosyl-ATP pyrophosphatase (108 aa).

The segment at 88–108 (VENELDRREGRSGIEEKASRK) is disordered. Positions 91–108 (ELDRREGRSGIEEKASRK) are enriched in basic and acidic residues.

It belongs to the PRA-PH family.

The protein resides in the cytoplasm. It carries out the reaction 1-(5-phospho-beta-D-ribosyl)-ATP + H2O = 1-(5-phospho-beta-D-ribosyl)-5'-AMP + diphosphate + H(+). It participates in amino-acid biosynthesis; L-histidine biosynthesis; L-histidine from 5-phospho-alpha-D-ribose 1-diphosphate: step 2/9. The sequence is that of Phosphoribosyl-ATP pyrophosphatase from Paracoccus denitrificans (strain Pd 1222).